Reading from the N-terminus, the 371-residue chain is Probable endolytic peptidoglycan transglycosylase RlpA (371 aa).

The first 25 residues, 1 to 25 (MNQRHLWTIVALSVTVLGTPAVGRT), serve as a signal peptide directing secretion. Residues 177-191 (LVASQSQNKSSSSQQ) show a composition bias toward low complexity. Residues 177–196 (LVASQSQNKSSSSQQKSERY) form a disordered region.

It belongs to the RlpA family.

In terms of biological role, lytic transglycosylase with a strong preference for naked glycan strands that lack stem peptides. This chain is Probable endolytic peptidoglycan transglycosylase RlpA, found in Nostoc sp. (strain PCC 7120 / SAG 25.82 / UTEX 2576).